A 375-amino-acid polypeptide reads, in one-letter code: Tyrosine--tRNA ligase (375 aa).

Tyr37, Tyr168, Gln172, Asp175, and Gln190 together coordinate L-tyrosine. The 'KMSKS' region motif lies at 251–255 (KMSKS). Lys254 is an ATP binding site.

The protein belongs to the class-I aminoacyl-tRNA synthetase family. TyrS type 4 subfamily. In terms of assembly, homodimer.

The protein resides in the cytoplasm. The catalysed reaction is tRNA(Tyr) + L-tyrosine + ATP = L-tyrosyl-tRNA(Tyr) + AMP + diphosphate + H(+). Functionally, catalyzes the attachment of tyrosine to tRNA(Tyr) in a two-step reaction: tyrosine is first activated by ATP to form Tyr-AMP and then transferred to the acceptor end of tRNA(Tyr). The chain is Tyrosine--tRNA ligase from Pyrococcus furiosus (strain ATCC 43587 / DSM 3638 / JCM 8422 / Vc1).